A 490-amino-acid polypeptide reads, in one-letter code: Glutamate--tRNA ligase (490 aa).

A 'HIGH' region motif is present at residues 10-20 (PSPTGRMHVGN). 4 residues coordinate Zn(2+): Cys-109, Cys-111, Cys-140, and His-142. Residues 257–261 (KLSKR) carry the 'KMSKS' region motif. Lys-260 contributes to the ATP binding site.

The protein belongs to the class-I aminoacyl-tRNA synthetase family. Glutamate--tRNA ligase type 1 subfamily. As to quaternary structure, monomer. It depends on Zn(2+) as a cofactor.

It is found in the cytoplasm. It catalyses the reaction tRNA(Glu) + L-glutamate + ATP = L-glutamyl-tRNA(Glu) + AMP + diphosphate. Catalyzes the attachment of glutamate to tRNA(Glu) in a two-step reaction: glutamate is first activated by ATP to form Glu-AMP and then transferred to the acceptor end of tRNA(Glu). This is Glutamate--tRNA ligase from Lachnoclostridium phytofermentans (strain ATCC 700394 / DSM 18823 / ISDg) (Clostridium phytofermentans).